A 100-amino-acid chain; its full sequence is NADH-quinone oxidoreductase subunit K (100 aa).

A run of 3 helical transmembrane segments spans residues 4–24 (LQHG…GLLI), 28–48 (LLFM…AFVV), and 60–80 (VMYI…LALL).

It belongs to the complex I subunit 4L family. In terms of assembly, NDH-1 is composed of 13 different subunits. Subunits NuoA, H, J, K, L, M, N constitute the membrane sector of the complex.

It localises to the cell inner membrane. It catalyses the reaction a quinone + NADH + 5 H(+)(in) = a quinol + NAD(+) + 4 H(+)(out). NDH-1 shuttles electrons from NADH, via FMN and iron-sulfur (Fe-S) centers, to quinones in the respiratory chain. The immediate electron acceptor for the enzyme in this species is believed to be ubiquinone. Couples the redox reaction to proton translocation (for every two electrons transferred, four hydrogen ions are translocated across the cytoplasmic membrane), and thus conserves the redox energy in a proton gradient. The sequence is that of NADH-quinone oxidoreductase subunit K from Edwardsiella ictaluri (strain 93-146).